A 296-amino-acid polypeptide reads, in one-letter code: 33 kDa chaperonin (296 aa).

2 cysteine pairs are disulfide-bonded: C238-C240 and C271-C274.

The protein belongs to the HSP33 family. In terms of processing, under oxidizing conditions two disulfide bonds are formed involving the reactive cysteines. Under reducing conditions zinc is bound to the reactive cysteines and the protein is inactive.

The protein localises to the cytoplasm. In terms of biological role, redox regulated molecular chaperone. Protects both thermally unfolding and oxidatively damaged proteins from irreversible aggregation. Plays an important role in the bacterial defense system toward oxidative stress. In Clostridium botulinum (strain Okra / Type B1), this protein is 33 kDa chaperonin.